Reading from the N-terminus, the 155-residue chain is Protein SprT-like (155 aa).

Residues 7 to 145 (QRHMEEVSLQ…GSCGGKLIQT (139 aa)) form the SprT-like domain. Residue H67 coordinates Zn(2+). Residue E68 is part of the active site. H71 provides a ligand contact to Zn(2+).

This sequence belongs to the SprT family. The cofactor is Zn(2+).

Its subcellular location is the cytoplasm. The chain is Protein SprT-like from Listeria monocytogenes serovar 1/2a (strain ATCC BAA-679 / EGD-e).